Consider the following 281-residue polypeptide: CCAAT/enhancer-binding protein epsilon (281 aa).

Residues M1 to L30 form a disordered region. K121 is covalently cross-linked (Glycyl lysine isopeptide (Lys-Gly) (interchain with G-Cter in SUMO2)). S181 bears the Phosphoserine mark. Residues S204–I267 form the bZIP domain. The interval R208–R245 is basic motif. The tract at residues L246–I267 is leucine-zipper.

This sequence belongs to the bZIP family. C/EBP subfamily. In terms of assembly, binds DNA as a homodimer and as a heterodimer. Can form stable heterodimers with CEBPA, CEBPB and CEBPD. Interacts with GATA1 and SPI1. Interacts with SMARCD2. In terms of processing, phosphorylated.

The protein resides in the nucleus. Its function is as follows. Transcriptional activator. C/EBP are DNA-binding proteins that recognize two different motifs: the CCAAT homology common to many promoters and the enhanced core homology common to many enhancers. Required for the promyelocyte-myelocyte transition in myeloid differentiation. In Mus musculus (Mouse), this protein is CCAAT/enhancer-binding protein epsilon (Cebpe).